We begin with the raw amino-acid sequence, 353 residues long: Quinolinate synthase (353 aa).

Iminosuccinate-binding residues include His47 and Ser68. Cys113 is a binding site for [4Fe-4S] cluster. Iminosuccinate contacts are provided by residues 139–141 (YAN) and Ser156. [4Fe-4S] cluster is bound at residue Cys200. Iminosuccinate is bound by residues 226 to 228 (HPE) and Thr243. Cys297 is a [4Fe-4S] cluster binding site.

This sequence belongs to the quinolinate synthase family. Type 1 subfamily. The cofactor is [4Fe-4S] cluster.

It is found in the cytoplasm. It carries out the reaction iminosuccinate + dihydroxyacetone phosphate = quinolinate + phosphate + 2 H2O + H(+). Its pathway is cofactor biosynthesis; NAD(+) biosynthesis; quinolinate from iminoaspartate: step 1/1. In terms of biological role, catalyzes the condensation of iminoaspartate with dihydroxyacetone phosphate to form quinolinate. The sequence is that of Quinolinate synthase from Vibrio cholerae serotype O1 (strain ATCC 39541 / Classical Ogawa 395 / O395).